The sequence spans 363 residues: Dual-specificity RNA methyltransferase RlmN (363 aa).

The Proton acceptor role is filled by Glu-102. The 242-residue stretch at 108-349 folds into the Radical SAM core domain; it reads EKKRATLCVS…KNRGQDIGAA (242 aa). A disulfide bond links Cys-115 and Cys-350. Residues Cys-122, Cys-126, and Cys-129 each coordinate [4Fe-4S] cluster. S-adenosyl-L-methionine-binding positions include 174–175, Ser-206, 228–230, and Asn-307; these read GE and SLH. The active-site S-methylcysteine intermediate is the Cys-350.

Belongs to the radical SAM superfamily. RlmN family. It depends on [4Fe-4S] cluster as a cofactor.

Its subcellular location is the cytoplasm. It carries out the reaction adenosine(2503) in 23S rRNA + 2 reduced [2Fe-2S]-[ferredoxin] + 2 S-adenosyl-L-methionine = 2-methyladenosine(2503) in 23S rRNA + 5'-deoxyadenosine + L-methionine + 2 oxidized [2Fe-2S]-[ferredoxin] + S-adenosyl-L-homocysteine. It catalyses the reaction adenosine(37) in tRNA + 2 reduced [2Fe-2S]-[ferredoxin] + 2 S-adenosyl-L-methionine = 2-methyladenosine(37) in tRNA + 5'-deoxyadenosine + L-methionine + 2 oxidized [2Fe-2S]-[ferredoxin] + S-adenosyl-L-homocysteine. Its function is as follows. Specifically methylates position 2 of adenine 2503 in 23S rRNA and position 2 of adenine 37 in tRNAs. m2A2503 modification seems to play a crucial role in the proofreading step occurring at the peptidyl transferase center and thus would serve to optimize ribosomal fidelity. The protein is Dual-specificity RNA methyltransferase RlmN of Buchnera aphidicola subsp. Schizaphis graminum (strain Sg).